The following is a 366-amino-acid chain: Inhibin alpha chain (366 aa).

Residues 1 to 18 form the signal peptide; sequence MVLHLLLFLLLTPQGGHS. Positions 19 to 61 are excised as a propeptide; it reads CQGLELARELVLAKVRALFLDALGPPAVTREGGDPGVRRLPRR. Positions 62-232 are cleaved as a propeptide — inhibin alpha N-terminal region; the sequence is HALGGFTHRG…PPSGGERARR (171 aa). Residues Asn-146 and Asn-268 are each glycosylated (N-linked (GlcNAc...) asparagine). 3 disulfide bridges follow: Cys-262–Cys-328, Cys-291–Cys-363, and Cys-295–Cys-365. Asn-302 carries an N-linked (GlcNAc...) asparagine; partial glycan.

This sequence belongs to the TGF-beta family. Dimeric, linked by one or more disulfide bonds. Activin B is a dimer of alpha and beta-B. Inhibin A is a dimer of alpha and beta-A. Inhibin B is a dimer of alpha and beta-B. Interacts with TGFBR3L; this interaction regulates female fertility. Post-translationally, proteolytic processing yields a number of bioactive forms. The 20/23 kDa forms consist solely of the mature alpha chain, the 26/29 kDa forms consist of the most N-terminal propeptide linked through a disulfide bond to the mature alpha chain, the 50/53 kDa forms encompass the entire proprotein. Each type can be furthermore either mono- or diglycosylated, causing the mass difference. In terms of tissue distribution, originally found in ovary (granulosa cells) and testis (Sertoli cells), but widely distributed in many tissues including brain and placenta. In adrenal cortex expression is limited to the zona reticularis and the innermost zona fasciculata in the normal gland, extending centripetally into the zona fasciculata in hyperplasia. Also found in adrenocortical tumors. Also expressed in prostate epithelium of benign prostatic hyperplasia, in regions of basal cell hyperplasia and in nonmalignant regions of high grade prostate cancer. Only circulating inhibin B is found in male, whereas circulating inhibins A and B are found in female.

It localises to the secreted. In terms of biological role, inhibins and activins inhibit and activate, respectively, the secretion of follitropin by the pituitary gland. Inhibins/activins are involved in regulating a number of diverse functions such as hypothalamic and pituitary hormone secretion, gonadal hormone secretion, germ cell development and maturation, erythroid differentiation, insulin secretion, nerve cell survival, embryonic axial development or bone growth, depending on their subunit composition. Inhibins appear to oppose the functions of activins. Inhibin A is a dimer of alpha/INHA and beta-A/INHBA that functions as a feedback regulator in the hypothalamic-pituitary-gonadal (HPG) axis. Inhibits the secretion of FSH from the anterior pituitary gland by acting on pituitary gonadotrope cells. Antagonizes activin A by binding to the proteoglycan, betaglycan, and forming a stable complex with and, thereby, sequestering type II activin receptors while excluding type I receptor. Functionally, inhibin B is a dimer of alpha and beta-B that plays a crucial role in the regulation of the reproductive system by inhibiting the secretion of follicle-stimulating hormone (FSH) from the anterior pituitary gland. Thereby, maintains reproductive homeostasis in both males and females. Acts as a more potent suppressor of FSH release than inhibin A. Functions as competitive receptor antagonist binding activin type II receptors with high affinity in the presence of the TGF-beta type III coreceptor/TGFBR3L. The polypeptide is Inhibin alpha chain (INHA) (Homo sapiens (Human)).